A 279-amino-acid polypeptide reads, in one-letter code: Putative pyruvate, phosphate dikinase regulatory protein (279 aa).

Glycine 152–serine 159 is an ADP binding site.

It belongs to the pyruvate, phosphate/water dikinase regulatory protein family. PDRP subfamily.

It carries out the reaction N(tele)-phospho-L-histidyl/L-threonyl-[pyruvate, phosphate dikinase] + ADP = N(tele)-phospho-L-histidyl/O-phospho-L-threonyl-[pyruvate, phosphate dikinase] + AMP + H(+). The enzyme catalyses N(tele)-phospho-L-histidyl/O-phospho-L-threonyl-[pyruvate, phosphate dikinase] + phosphate + H(+) = N(tele)-phospho-L-histidyl/L-threonyl-[pyruvate, phosphate dikinase] + diphosphate. Functionally, bifunctional serine/threonine kinase and phosphorylase involved in the regulation of the pyruvate, phosphate dikinase (PPDK) by catalyzing its phosphorylation/dephosphorylation. This Anaplasma marginale (strain St. Maries) protein is Putative pyruvate, phosphate dikinase regulatory protein.